Reading from the N-terminus, the 157-residue chain is Large ribosomal subunit protein uL15 (157 aa).

The tract at residues 1–41 (MKLHELSDNPGATKKRKRVGRGPGSGTGKMGGRGIKGQKSR) is disordered. Over residues 21 to 35 (RGPGSGTGKMGGRGI) the composition is skewed to gly residues.

Belongs to the universal ribosomal protein uL15 family. As to quaternary structure, part of the 50S ribosomal subunit.

Functionally, binds to the 23S rRNA. The chain is Large ribosomal subunit protein uL15 from Jannaschia sp. (strain CCS1).